Here is a 188-residue protein sequence, read N- to C-terminus: MSIKSDKWIRRMSEEFGMIDPFEPNQIKEADGKRIISYGTSSYGYDIRCANEFKIFTNINSTIVDPKNFDPKNFVTVEDDCCIIPPNSFALARTVEYFRIPRNVLTVCLGKSTYARCGIIVNVTPFEPEWEGYVTLEFSNTTPLPAKIYAGEGVAQVLFFESDEICETSYKDRNGKYMGQTGVTLPKA.

DCTP-binding positions include 111–116, 135–137, glutamine 156, tyrosine 170, and glutamine 180; these read KSTYAR and TLE. The active-site Proton donor/acceptor is the glutamate 137.

The protein belongs to the dCTP deaminase family. In terms of assembly, homotrimer.

The catalysed reaction is dCTP + H2O + H(+) = dUTP + NH4(+). Its pathway is pyrimidine metabolism; dUMP biosynthesis; dUMP from dCTP (dUTP route): step 1/2. Catalyzes the deamination of dCTP to dUTP. The protein is dCTP deaminase of Neisseria meningitidis serogroup B (strain ATCC BAA-335 / MC58).